Reading from the N-terminus, the 361-residue chain is Phosphate acyltransferase (361 aa).

The interval 342-361 (ADGAAAEQGPTPRRTAPRQT) is disordered.

The protein belongs to the PlsX family. As to quaternary structure, homodimer. Probably interacts with PlsY.

The protein resides in the cytoplasm. The catalysed reaction is a fatty acyl-[ACP] + phosphate = an acyl phosphate + holo-[ACP]. It functions in the pathway lipid metabolism; phospholipid metabolism. In terms of biological role, catalyzes the reversible formation of acyl-phosphate (acyl-PO(4)) from acyl-[acyl-carrier-protein] (acyl-ACP). This enzyme utilizes acyl-ACP as fatty acyl donor, but not acyl-CoA. This chain is Phosphate acyltransferase, found in Anaeromyxobacter sp. (strain K).